Reading from the N-terminus, the 227-residue chain is Lipoprotein-releasing system ATP-binding protein LolD (227 aa).

Positions 7-227 (LRLERIGRAY…TLKDGRVVDL (221 aa)) constitute an ABC transporter domain. 43–50 (APSGAGKS) is a binding site for ATP.

This sequence belongs to the ABC transporter superfamily. Lipoprotein translocase (TC 3.A.1.125) family. As to quaternary structure, the complex is composed of two ATP-binding proteins (LolD) and two transmembrane proteins (LolC and LolE).

It localises to the cell inner membrane. Its function is as follows. Part of the ABC transporter complex LolCDE involved in the translocation of mature outer membrane-directed lipoproteins, from the inner membrane to the periplasmic chaperone, LolA. Responsible for the formation of the LolA-lipoprotein complex in an ATP-dependent manner. This is Lipoprotein-releasing system ATP-binding protein LolD from Brucella abortus biovar 1 (strain 9-941).